The primary structure comprises 96 residues: Co-chaperonin GroES (96 aa).

This sequence belongs to the GroES chaperonin family. In terms of assembly, heptamer of 7 subunits arranged in a ring. Interacts with the chaperonin GroEL.

It localises to the cytoplasm. Its function is as follows. Together with the chaperonin GroEL, plays an essential role in assisting protein folding. The GroEL-GroES system forms a nano-cage that allows encapsulation of the non-native substrate proteins and provides a physical environment optimized to promote and accelerate protein folding. GroES binds to the apical surface of the GroEL ring, thereby capping the opening of the GroEL channel. This is Co-chaperonin GroES from Geotalea daltonii (strain DSM 22248 / JCM 15807 / FRC-32) (Geobacter daltonii).